The following is a 612-amino-acid chain: Threonine--tRNA ligase (612 aa).

Residues 218 to 509 are catalytic; the sequence is NHRKLGVELG…LSEHFGGNFP (292 aa). Zn(2+) is bound by residues cysteine 310, histidine 361, and histidine 486.

It belongs to the class-II aminoacyl-tRNA synthetase family. Homodimer. It depends on Zn(2+) as a cofactor.

The protein resides in the cytoplasm. It catalyses the reaction tRNA(Thr) + L-threonine + ATP = L-threonyl-tRNA(Thr) + AMP + diphosphate + H(+). In terms of biological role, catalyzes the attachment of threonine to tRNA(Thr) in a two-step reaction: L-threonine is first activated by ATP to form Thr-AMP and then transferred to the acceptor end of tRNA(Thr). Also edits incorrectly charged L-seryl-tRNA(Thr). The sequence is that of Threonine--tRNA ligase from Helicobacter pylori (strain Shi470).